Here is a 455-residue protein sequence, read N- to C-terminus: Hydroxymethylglutaryl-CoA synthase 2 (455 aa).

Residue E86 is the Proton donor/acceptor of the active site. C120 (acyl-thioester intermediate) is an active-site residue. (3S)-3-hydroxy-3-methylglutaryl-CoA is bound by residues C120, T161, S211, H255, K264, N329, and S363. H255 serves as the catalytic Proton donor/acceptor.

It belongs to the thiolase-like superfamily. HMG-CoA synthase family.

The enzyme catalyses acetoacetyl-CoA + acetyl-CoA + H2O = (3S)-3-hydroxy-3-methylglutaryl-CoA + CoA + H(+). It participates in metabolic intermediate biosynthesis; (R)-mevalonate biosynthesis; (R)-mevalonate from acetyl-CoA: step 2/3. This enzyme condenses acetyl-CoA with acetoacetyl-CoA to form HMG-CoA, which is the substrate for HMG-CoA reductase. This chain is Hydroxymethylglutaryl-CoA synthase 2 (HMGCS-2), found in Blattella germanica (German cockroach).